A 191-amino-acid polypeptide reads, in one-letter code: MLEKVKKIFRESAEVKLAFVELYAQQIVDVAGIIATALKDGNKVLLFGNGGSAADAQHIAAELVGRFKKERRPLPAIALTTDTSILTALGNDYGFETIFERQVEALCMPGDVAIGITTSGNSENVIRGLKKAHDLGATTIAFTGRNGGKVAQIAHYTFIVPSYETQRIQECHITLGHVLCELVEEMVCERS.

An SIS domain is found at 34–191; that stretch reads IATALKDGNK…LVEEMVCERS (158 aa). 49 to 51 provides a ligand contact to substrate; the sequence is NGG. Zn(2+) is bound by residues His58 and Glu62. Residues Glu62, 91–92, 117–119, Ser122, and Gln169 contribute to the substrate site; these read ND and TTS. Zn(2+) is bound by residues Gln169 and His177.

The protein belongs to the SIS family. GmhA subfamily. It depends on Zn(2+) as a cofactor.

It localises to the cytoplasm. It carries out the reaction 2 D-sedoheptulose 7-phosphate = D-glycero-alpha-D-manno-heptose 7-phosphate + D-glycero-beta-D-manno-heptose 7-phosphate. Its pathway is carbohydrate biosynthesis; D-glycero-D-manno-heptose 7-phosphate biosynthesis; D-glycero-alpha-D-manno-heptose 7-phosphate and D-glycero-beta-D-manno-heptose 7-phosphate from sedoheptulose 7-phosphate: step 1/1. Catalyzes the isomerization of sedoheptulose 7-phosphate in D-glycero-D-manno-heptose 7-phosphate. The sequence is that of Phosphoheptose isomerase from Aquifex aeolicus (strain VF5).